A 599-amino-acid polypeptide reads, in one-letter code: Cytosolic Fe-S cluster assembly factor nar1 (599 aa).

[4Fe-4S] cluster is bound by residues cysteine 20, cysteine 62, cysteine 65, cysteine 68, cysteine 210, cysteine 265, cysteine 468, and cysteine 472.

Belongs to the NARF family.

In terms of biological role, component of the cytosolic Fe/S protein assembly machinery. Required for maturation of extramitochondrial Fe/S proteins. May play a role in the transfer of pre-assembled Fe/S clusters to target apoproteins. This chain is Cytosolic Fe-S cluster assembly factor nar1 (nar1), found in Aspergillus terreus (strain NIH 2624 / FGSC A1156).